A 78-amino-acid chain; its full sequence is Large ribosomal subunit protein bL28 (78 aa).

The protein belongs to the bacterial ribosomal protein bL28 family.

This is Large ribosomal subunit protein bL28 from Klebsiella pneumoniae (strain 342).